The chain runs to 307 residues: MSELTKAQQQNFTKLQKKIRRNTGKAIADYNMIEDGDRIMVCLSGGKDSFTMLDILIGLKKSAPISFDLIAVNLDQKQPGFPTHILPEYLDTLGVEYRVVEEDTYSIVQDKLIEGKTTCSLCSRLRRGILYRTAKELGATKIALGHHRDDILETMFLNMFYGGKLKGMPPKLVSDNGEHVVIRPLAYCREKDIIKYADLADYPIIPCNLCGSQPNMQRQNIKQMLNTWDTQFPGRIESMFTAMQNVVPSHLADFNTFDFKSINRDSGVINGGDIGFDKEEMPVQPVDIDDAVTEFDPSLKLDIVNVQ.

Residues 44–49 (SGGKDS) carry the PP-loop motif motif. Residues cysteine 119, cysteine 122, and cysteine 210 each coordinate [4Fe-4S] cluster.

The protein belongs to the TtcA family. Homodimer. Mg(2+) is required as a cofactor. The cofactor is [4Fe-4S] cluster.

It is found in the cytoplasm. The catalysed reaction is cytidine(32) in tRNA + S-sulfanyl-L-cysteinyl-[cysteine desulfurase] + AH2 + ATP = 2-thiocytidine(32) in tRNA + L-cysteinyl-[cysteine desulfurase] + A + AMP + diphosphate + H(+). It participates in tRNA modification. Functionally, catalyzes the ATP-dependent 2-thiolation of cytidine in position 32 of tRNA, to form 2-thiocytidine (s(2)C32). The sulfur atoms are provided by the cysteine/cysteine desulfurase (IscS) system. This chain is tRNA-cytidine(32) 2-sulfurtransferase, found in Aliivibrio salmonicida (strain LFI1238) (Vibrio salmonicida (strain LFI1238)).